We begin with the raw amino-acid sequence, 114 residues long: WDAEPGALYTLVMTDPDVPSRKNPVFREWHHWLIINISGQNVSSGTVLSDYIGSGPPKGTGLHRYVFLVYKQPGSITDTQHGGNRRNFKVMDFANKHHLGNPVAGNFFQAKHED.

Belongs to the phosphatidylethanolamine-binding protein family.

This chain is Protein D2 (D2), found in Onchocerca volvulus.